Here is a 2327-residue protein sequence, read N- to C-terminus: Kielin/chordin-like protein (2327 aa).

Residues 1 to 19 (MNTLLWTILLPLLFSFCVC) form the signal peptide. The segment at 250-294 (LPLPYSLSGERQMEDEEIQREPRAPDLSDTDHYQQQQSEVPAQLL) is disordered. The segment covering 268 to 281 (QREPRAPDLSDTDH) has biased composition (basic and acidic residues). A coiled-coil region spans residues 291-332 (AQLLAKDDRLQRLEEAVKGLTNMIDMIKSQNADLQARVIALE). VWFC domains lie at 339 to 400 (STCV…SVGP), 401 to 438 (CMSCICQSGEVSCTPKLCPPVTCSDPVTLPNECCPLCA), 439 to 493 (TGCS…AKCQ), 494 to 553 (QGCE…PSCP), 554 to 610 (VCEL…LDCS), 611 to 669 (ACEM…SQCQ), 670 to 728 (SCMD…PMCD), 729 to 786 (GCLY…PRCE), 787 to 847 (GCEY…PSCD), 848 to 907 (VCDF…PVCK), 908 to 966 (VCVQ…PVCD), 967 to 1025 (SCSY…AKCP), 1026 to 1083 (DCRY…NNCN), 1084 to 1142 (GCNY…PQCP), 1146 to 1203 (ADCP…RSCD), 1204 to 1260 (GCLM…KECQ), 1261 to 1319 (DCQY…PVCD), 1321 to 1377 (CSYN…CPIC), 1378 to 1439 (QGCH…DGCN), 1440 to 1495 (YSGR…PRCT), 1496 to 1555 (GICK…PVCD), 1556 to 1614 (RCFY…RECP), 1615 to 1673 (VCRY…PRCR), 1674 to 1731 (GCVY…PVCA), 1732 to 1799 (DCIS…SSCA), 1800 to 1860 (QALS…PVCN), 1861 to 1924 (ECVV…HECQ), and 1928 to 1988 (VSCW…PHCI). Positions 1992–2168 (ATCIAFGDPH…SSNDSSSSCW (177 aa)) constitute a VWFD domain. 2 cysteine pairs are disulfide-bonded: C1994-C2126 and C2016-C2167. Residues 2259 to 2319 (CPHDRGYVFD…ESHCIPPESC (61 aa)) enclose the TIL domain.

Its subcellular location is the secreted. May be a signaling molecule that mediates inductive activities of the embryonic midline. Able to dorsalize mesoderm. The polypeptide is Kielin/chordin-like protein (kcp) (Xenopus laevis (African clawed frog)).